The chain runs to 516 residues: Golgi-associated kinase 1B (516 aa).

Over 1–37 the chain is Cytoplasmic; the sequence is MTCPDKLGQLINWFVCSLCAPRVCKLWSSRRPRTRRN. A helical; Signal-anchor for type II membrane protein membrane pass occupies residues 38 to 55; that stretch reads LLLGTACAIYLGFLVSQV. Residues 56 to 516 lie on the Extracellular side of the membrane; the sequence is GKGSFQHGQA…HGARVLPMNE (461 aa). The N-linked (GlcNAc...) asparagine glycan is linked to N286.

It belongs to the GASK family.

Its subcellular location is the golgi apparatus membrane. This Rattus norvegicus (Rat) protein is Golgi-associated kinase 1B.